We begin with the raw amino-acid sequence, 25 residues long: Ocellatin-K1 (25 aa).

Isoleucine amide is present on I25.

Expressed by the skin glands.

It is found in the secreted. Functionally, has hemolytic and antibacterial activity. The chain is Ocellatin-K1 from Leptodactylus knudseni (Knudsen's thin-toed frog).